We begin with the raw amino-acid sequence, 713 residues long: MEEKNGDAKTFWMELQDDGKVDLMFEKTQNVLHSLKQKIKDGSATNGDYVQAMNLVNEATLSNTQTLEKGMFITYSNPEVNTHRSNHTPVTQSEQENKSSAVPSASCDNSCPKGCTIPSPGKKVFLPVKNKADNLVKKEAPLHISFHRHICSRTCLMETPLSLKGENPLQLPIRCHFQRRHAKTNSHSSALHVNYKTPCGRNLRNMEEVFHYLLETECNFLFTDNFSFNTYVQLTRNHPKQNEVVSDVDISNGVESVSIPFCNEIDNSKLPRFKYRNTVWPRIYHLNFSNMFSDSCDCSEGCIDIKKCACLQLTAKNAKACPLSSDGECAGYKYKRLQRLIPTGIYECNLLCKCNKQMCQNRVIQHGVRVRLQVFKSEKKGWGVRCLDDIDKGTFVCIYSGRLLRRATPEKTNIGENGREQQHIVKNSFSKKRKLEVVCSDCDAHCDSPKAEDCPPKLSGDLKEPAVEMNHRNISRTQHHSVIRRTKSKTTVFHYSEKNMGFVCSDSAAPEDKNGFKPAQEHVNSEARRAHEDLSSNPAGDSEDTQLTESDVIDITASREDSAPAYRCKHATIVDRKDTKQVLEVPGKKSQEEEPAASQSQQALCDEELPSERTKIPSASLMQLSKESLFLLDASKEGNVGRFLNHSCCPNLWVQNVFVETHDRNFPLVAFFTNRYVKARTELTWDYGYEAGATPAKEILCQCGFNKCRKKLI.

The segment at 78–109 is disordered; it reads PEVNTHRSNHTPVTQSEQENKSSAVPSASCDN. The segment covering 87 to 109 has biased composition (polar residues); it reads HTPVTQSEQENKSSAVPSASCDN. The region spanning 161 to 233 is the MBD domain; the sequence is LSLKGENPLQ…DNFSFNTYVQ (73 aa). A Pre-SET domain is found at 294–367; it reads DSCDCSEGCI…MCQNRVIQHG (74 aa). Zn(2+)-binding residues include C296, C298, C302, C308, C310, C348, C352, C354, and C359. The region spanning 370 to 688 is the SET domain; that stretch reads VRLQVFKSEK…ARTELTWDYG (319 aa). 380–382 is a binding site for S-adenosyl-L-methionine; it reads KGW. Composition is skewed to basic and acidic residues over residues 511–534 and 579–592; these read EDKN…HEDL and TKQV…KSQE. Disordered regions lie at residues 511 to 549 and 579 to 608; these read EDKN…QLTE and TKQV…CDEE. S-adenosyl-L-methionine contacts are provided by residues R642 and 645–646; that span reads NH. Positions 648, 701, 703, and 708 each coordinate Zn(2+).

This sequence belongs to the class V-like SAM-binding methyltransferase superfamily.

The protein localises to the nucleus. It localises to the chromosome. The enzyme catalyses N(6),N(6)-dimethyl-L-lysyl(9)-[histone H3] + S-adenosyl-L-methionine = N(6),N(6),N(6)-trimethyl-L-lysyl(9)-[histone H3] + S-adenosyl-L-homocysteine + H(+). Functionally, histone methyltransferase involved in left-right axis specification in early development and mitosis. Specifically trimethylates 'Lys-9' of histone H3 (H3K9me3). H3K9me3 is a specific tag for epigenetic transcriptional repression that recruits HP1 (CBX1, CBX3 and/or CBX5) proteins to methylated histones. Contributes to H3K9me3 in both the interspersed repetitive elements and centromere-associated repeats. Plays a role in chromosome condensation and segregation during mitosis. This is Histone-lysine N-methyltransferase SETDB2 (Setdb2) from Mus musculus (Mouse).